A 498-amino-acid polypeptide reads, in one-letter code: Guanosine-5'-triphosphate,3'-diphosphate pyrophosphatase (498 aa).

Belongs to the GppA/Ppx family. GppA subfamily.

The catalysed reaction is guanosine 3'-diphosphate 5'-triphosphate + H2O = guanosine 3',5'-bis(diphosphate) + phosphate + H(+). Its pathway is purine metabolism; ppGpp biosynthesis; ppGpp from GTP: step 2/2. Its function is as follows. Catalyzes the conversion of pppGpp to ppGpp. Guanosine pentaphosphate (pppGpp) is a cytoplasmic signaling molecule which together with ppGpp controls the 'stringent response', an adaptive process that allows bacteria to respond to amino acid starvation, resulting in the coordinated regulation of numerous cellular activities. The polypeptide is Guanosine-5'-triphosphate,3'-diphosphate pyrophosphatase (Yersinia enterocolitica serotype O:8 / biotype 1B (strain NCTC 13174 / 8081)).